Reading from the N-terminus, the 184-residue chain is Probable RNA 2'-phosphotransferase (184 aa).

The protein belongs to the KptA/TPT1 family.

Its function is as follows. Removes the 2'-phosphate from RNA via an intermediate in which the phosphate is ADP-ribosylated by NAD followed by a presumed transesterification to release the RNA and generate ADP-ribose 1''-2''-cyclic phosphate (APPR&gt;P). May function as an ADP-ribosylase. This Escherichia coli (strain K12 / MC4100 / BW2952) protein is Probable RNA 2'-phosphotransferase.